The sequence spans 212 residues: Ropporin-1 (212 aa).

The RIIa domain maps to proline 12 to alanine 43. At serine 56 the chain carries Phosphoserine. Positions valine 209–glutamate 212 are interaction with RHPN1.

The protein belongs to the ropporin family. Homodimer. Interacts with AKAP3. May interact with SPA17. Interacts with RHPN1. Interacts with FSCB; the interaction increases upon spermatozoa capacitation conditions. Interacts with CFAP61. In terms of processing, sumoylated, sumoylation decreases upon spermatozoa capacitation conditions.

It localises to the cell projection. Its subcellular location is the cilium. The protein localises to the flagellum. Its function is as follows. Important for male fertility. With ROPN1L, involved in fibrous sheath integrity and sperm motility, plays a role in PKA-dependent signaling processes required for spermatozoa capacitation. This is Ropporin-1 (Ropn1) from Rattus norvegicus (Rat).